The primary structure comprises 539 residues: Nucleobase-ascorbate transporter 8 (539 aa).

The segment at 1–20 (MAGDGVENAKPPQKQEDLQP) is disordered. 12 helical membrane-spanning segments follow: residues 44–64 (ILLG…IPTM), 79–99 (LIQT…FFGT), 101–121 (LPAV…IVLA), 141–161 (IQGA…SGLW), 167–187 (FLSP…LYEQ), 189–209 (FPML…LVIF), 229–249 (FAVI…TIGG), 295–315 (IFAM…TYIA), 368–388 (VGSR…SILG), 399–421 (APIV…LSLI), 433–453 (FILG…YQYT), and 470–490 (NIIN…AFFL).

Belongs to the nucleobase:cation symporter-2 (NCS2) (TC 2.A.40) family. In terms of tissue distribution, highly expressed in ovules, endosperm and embryo.

It localises to the cell membrane. This chain is Nucleobase-ascorbate transporter 8 (NAT8), found in Arabidopsis thaliana (Mouse-ear cress).